The following is a 286-amino-acid chain: 4-diphosphocytidyl-2-C-methyl-D-erythritol kinase (286 aa).

K11 is a catalytic residue. Residue 94-104 (PMGGGIGGGSS) participates in ATP binding. The active site involves D136.

It belongs to the GHMP kinase family. IspE subfamily.

The enzyme catalyses 4-CDP-2-C-methyl-D-erythritol + ATP = 4-CDP-2-C-methyl-D-erythritol 2-phosphate + ADP + H(+). It participates in isoprenoid biosynthesis; isopentenyl diphosphate biosynthesis via DXP pathway; isopentenyl diphosphate from 1-deoxy-D-xylulose 5-phosphate: step 3/6. Functionally, catalyzes the phosphorylation of the position 2 hydroxy group of 4-diphosphocytidyl-2C-methyl-D-erythritol. In Pseudomonas putida (strain GB-1), this protein is 4-diphosphocytidyl-2-C-methyl-D-erythritol kinase.